Reading from the N-terminus, the 122-residue chain is Copper metallothionein 1 (122 aa).

The cys-rich copper-binding 1 stretch occupies residues 1–35; sequence MACNCPPQKNTACCSTSEAQDKCTCQKGNCECKAC. Positions 36–50 are spacer B1; it reads PNSTKTSESGGKAST. The cys-rich copper-binding 2 stretch occupies residues 51 to 72; the sequence is CNCGGSGEACTCPPGQCACDKC. The tract at residues 73-81 is spacer B2; sequence PKKAKSVST. The tract at residues 82 to 103 is cys-rich copper-binding 3; that stretch reads CGCGGSGAACSCPPGKCACDNC. A spacer B3 region spans residues 104–113; that stretch reads PKQAQEKVSS. The interval 114 to 122 is cys-rich copper-binding 4; it reads CACSGSGAA.

It belongs to the metallothionein superfamily.

The protein resides in the cytoplasm. It is found in the cell cortex. Functionally, copper metallothionein that protects the cell against copper toxicity by tightly chelating copper ions. Required for antioxidant-mediated growth rescue in the presence of fluconazole. Acts as a critical factors for lung colonization and virulence. This chain is Copper metallothionein 1, found in Cryptococcus neoformans var. grubii serotype A (strain H99 / ATCC 208821 / CBS 10515 / FGSC 9487) (Filobasidiella neoformans var. grubii).